The chain runs to 64 residues: Large ribosomal subunit protein bL28 (64 aa).

The interval 1–26 is disordered; it reads MARRDQLTGKGPLSGNTRSHAMNHSK.

This sequence belongs to the bacterial ribosomal protein bL28 family.

The protein is Large ribosomal subunit protein bL28 of Ureaplasma urealyticum serovar 10 (strain ATCC 33699 / Western).